The chain runs to 134 residues: Ribosome-binding factor A (134 aa).

Belongs to the RbfA family. In terms of assembly, monomer. Binds 30S ribosomal subunits, but not 50S ribosomal subunits or 70S ribosomes.

Its subcellular location is the cytoplasm. One of several proteins that assist in the late maturation steps of the functional core of the 30S ribosomal subunit. Associates with free 30S ribosomal subunits (but not with 30S subunits that are part of 70S ribosomes or polysomes). Required for efficient processing of 16S rRNA. May interact with the 5'-terminal helix region of 16S rRNA. The protein is Ribosome-binding factor A of Rhizobium etli (strain CIAT 652).